A 151-amino-acid polypeptide reads, in one-letter code: Deoxyuridine 5'-triphosphate nucleotidohydrolase (151 aa).

Residues 70 to 72 (RSG), Asn83, 87 to 89 (LID), and Met97 each bind substrate.

It belongs to the dUTPase family. The cofactor is Mg(2+).

It carries out the reaction dUTP + H2O = dUMP + diphosphate + H(+). It functions in the pathway pyrimidine metabolism; dUMP biosynthesis; dUMP from dCTP (dUTP route): step 2/2. Functionally, this enzyme is involved in nucleotide metabolism: it produces dUMP, the immediate precursor of thymidine nucleotides and it decreases the intracellular concentration of dUTP so that uracil cannot be incorporated into DNA. The polypeptide is Deoxyuridine 5'-triphosphate nucleotidohydrolase (Glaesserella parasuis serovar 5 (strain SH0165) (Haemophilus parasuis)).